Here is a 533-residue protein sequence, read N- to C-terminus: CTP synthase (533 aa).

An amidoligase domain region spans residues 1–268 (MGETKYIFVT…DETILQKMGL (268 aa)). Position 15 (serine 15) interacts with CTP. UTP is bound at residue serine 15. ATP is bound at residue 16-21 (SLGKGI). An L-glutamine-binding site is contributed by tyrosine 56. Aspartate 73 provides a ligand contact to ATP. 2 residues coordinate Mg(2+): aspartate 73 and glutamate 143. CTP contacts are provided by residues 150–152 (DIE), 189–194 (KTKPTQ), and lysine 225. UTP contacts are provided by residues 189–194 (KTKPTQ) and lysine 225. In terms of domain architecture, Glutamine amidotransferase type-1 spans 301 to 533 (YVELQDAYKS…VSFIKAAIDK (233 aa)). Glycine 356 provides a ligand contact to L-glutamine. The active-site Nucleophile; for glutamine hydrolysis is cysteine 383. L-glutamine contacts are provided by residues 384 to 387 (LGMQ), glutamate 407, and arginine 464. Catalysis depends on residues histidine 509 and glutamate 511.

It belongs to the CTP synthase family. In terms of assembly, homotetramer.

It carries out the reaction UTP + L-glutamine + ATP + H2O = CTP + L-glutamate + ADP + phosphate + 2 H(+). It catalyses the reaction L-glutamine + H2O = L-glutamate + NH4(+). The catalysed reaction is UTP + NH4(+) + ATP = CTP + ADP + phosphate + 2 H(+). It functions in the pathway pyrimidine metabolism; CTP biosynthesis via de novo pathway; CTP from UDP: step 2/2. With respect to regulation, allosterically activated by GTP, when glutamine is the substrate; GTP has no effect on the reaction when ammonia is the substrate. The allosteric effector GTP functions by stabilizing the protein conformation that binds the tetrahedral intermediate(s) formed during glutamine hydrolysis. Inhibited by the product CTP, via allosteric rather than competitive inhibition. Its function is as follows. Catalyzes the ATP-dependent amination of UTP to CTP with either L-glutamine or ammonia as the source of nitrogen. Regulates intracellular CTP levels through interactions with the four ribonucleotide triphosphates. The polypeptide is CTP synthase (Bacteroides fragilis (strain YCH46)).